The primary structure comprises 165 residues: Chorismate pyruvate-lyase (165 aa).

Positions 35, 77, 115, and 156 each coordinate substrate.

This sequence belongs to the UbiC family. Monomer.

The protein resides in the cytoplasm. It catalyses the reaction chorismate = 4-hydroxybenzoate + pyruvate. The protein operates within cofactor biosynthesis; ubiquinone biosynthesis. Removes the pyruvyl group from chorismate, with concomitant aromatization of the ring, to provide 4-hydroxybenzoate (4HB) for the ubiquinone pathway. This Shigella boydii serotype 18 (strain CDC 3083-94 / BS512) protein is Chorismate pyruvate-lyase.